The primary structure comprises 331 residues: UPF0194 membrane protein YbhG (331 aa).

A signal peptide spans Met-1–Ala-19. The stretch at Arg-140 to Pro-209 forms a coiled coil.

This sequence belongs to the UPF0194 family.

The protein resides in the periplasm. In Salmonella typhi, this protein is UPF0194 membrane protein YbhG (ybhG).